A 354-amino-acid chain; its full sequence is MLFNLRILLNNAAFRNGHNFMVRNFRCGQPLQNKVQLKGRDLLTLKNFTGEEIKYMLWLSADLKFRIKQKGEYLPLLQGKSLGMIFEKRSTRTRLSTETGFALLGGHPCFLTTQDIHLGVNESLTDTARVLSSMADAVLARVYKQSDLDTLAKEASIPIINGLSDLYHPIQILADYLTLQEHYSSLKGLTLSWIGDGNNILHSIMMSAAKFGMHLQAATPKGYEPDASVTKLAEQYAKENGTKLLLTNDPLEAAHGGNVLITDTWISMGQEEEKKKRLQAFQGYQVTMKTAKVAASDWTFLHCLPRKPEEVDDEVFYSPRSLVFPEAENRKWTIMAVMVSLLTDYSPQLQKPKF.

A mitochondrion-targeting transit peptide spans 1–32 (MLFNLRILLNNAAFRNGHNFMVRNFRCGQPLQ). Residue K70 is modified to N6-acetyllysine; alternate. K70 bears the N6-succinyllysine; alternate mark. N6-succinyllysine is present on K80. N6-acetyllysine; alternate is present on K88. N6-succinyllysine; alternate is present on K88. 90-93 (STRT) contributes to the carbamoyl phosphate binding site. S133 bears the Phosphoserine mark. R141 serves as a coordination point for carbamoyl phosphate. K144 carries the post-translational modification N6-acetyllysine; alternate. At K144 the chain carries N6-succinyllysine; alternate. The carbamoyl phosphate site is built by H168 and Q171. N199 is a binding site for L-ornithine. Residues K221, K231, and K238 each carry the N6-acetyllysine; alternate modification. 3 positions are modified to N6-succinyllysine; alternate: K221, K231, and K238. K243 is subject to N6-acetyllysine. 3 residues coordinate L-ornithine: D263, S267, and M268. 2 positions are modified to N6-succinyllysine: K274 and K289. Residue K292 is modified to N6-acetyllysine; alternate. K292 carries the post-translational modification N6-succinyllysine; alternate. C303 serves as the catalytic Proton acceptor. 303–304 (CL) contacts carbamoyl phosphate. An N6-acetyllysine; alternate modification is found at K307. At K307 the chain carries N6-succinyllysine; alternate. R330 lines the carbamoyl phosphate pocket.

The protein belongs to the aspartate/ornithine carbamoyltransferase superfamily. OTCase family. As to quaternary structure, homotrimer. Acetylation at Lys-88 negatively regulates ornithine carbamoyltransferase activity in response to nutrient signals. As to expression, mainly expressed in liver and intestinal mucosa.

It localises to the mitochondrion matrix. It carries out the reaction carbamoyl phosphate + L-ornithine = L-citrulline + phosphate + H(+). It functions in the pathway nitrogen metabolism; urea cycle; L-citrulline from L-ornithine and carbamoyl phosphate: step 1/1. Negatively regulated by lysine acetylation. In terms of biological role, catalyzes the second step of the urea cycle, the condensation of carbamoyl phosphate with L-ornithine to form L-citrulline. The urea cycle ensures the detoxification of ammonia by converting it to urea for excretion. The sequence is that of Ornithine transcarbamylase, mitochondrial from Homo sapiens (Human).